Here is a 461-residue protein sequence, read N- to C-terminus: Argininosuccinate lyase (461 aa).

Belongs to the lyase 1 family. Argininosuccinate lyase subfamily.

Its subcellular location is the cytoplasm. The enzyme catalyses 2-(N(omega)-L-arginino)succinate = fumarate + L-arginine. It participates in amino-acid biosynthesis; L-arginine biosynthesis; L-arginine from L-ornithine and carbamoyl phosphate: step 3/3. In Chloroflexus aurantiacus (strain ATCC 29366 / DSM 635 / J-10-fl), this protein is Argininosuccinate lyase.